The sequence spans 874 residues: Alanine--tRNA ligase (874 aa).

Residues H562, H566, C664, and H668 each contribute to the Zn(2+) site.

Belongs to the class-II aminoacyl-tRNA synthetase family. Zn(2+) serves as cofactor.

It localises to the cytoplasm. It catalyses the reaction tRNA(Ala) + L-alanine + ATP = L-alanyl-tRNA(Ala) + AMP + diphosphate. Catalyzes the attachment of alanine to tRNA(Ala) in a two-step reaction: alanine is first activated by ATP to form Ala-AMP and then transferred to the acceptor end of tRNA(Ala). Also edits incorrectly charged Ser-tRNA(Ala) and Gly-tRNA(Ala) via its editing domain. The sequence is that of Alanine--tRNA ligase from Shewanella halifaxensis (strain HAW-EB4).